Reading from the N-terminus, the 92-residue chain is Signal recognition particle 19 kDa protein (92 aa).

The protein belongs to the SRP19 family. In terms of assembly, part of the signal recognition particle protein translocation system, which is composed of SRP and FtsY. Archaeal SRP consists of a 7S RNA molecule of 300 nucleotides and two protein subunits: SRP54 and SRP19.

Its subcellular location is the cytoplasm. Its function is as follows. Involved in targeting and insertion of nascent membrane proteins into the cytoplasmic membrane. Binds directly to 7S RNA and mediates binding of the 54 kDa subunit of the SRP. The sequence is that of Signal recognition particle 19 kDa protein from Haloferax volcanii (strain ATCC 29605 / DSM 3757 / JCM 8879 / NBRC 14742 / NCIMB 2012 / VKM B-1768 / DS2) (Halobacterium volcanii).